Consider the following 499-residue polypeptide: Histidine ammonia-lyase (499 aa).

The 5-imidazolinone (Ala-Gly) cross-link spans 142 to 144; the sequence is ASG. Serine 143 is modified (2,3-didehydroalanine (Ser)).

The protein belongs to the PAL/histidase family. In terms of processing, contains an active site 4-methylidene-imidazol-5-one (MIO), which is formed autocatalytically by cyclization and dehydration of residues Ala-Ser-Gly.

Its subcellular location is the cytoplasm. It catalyses the reaction L-histidine = trans-urocanate + NH4(+). The protein operates within amino-acid degradation; L-histidine degradation into L-glutamate; N-formimidoyl-L-glutamate from L-histidine: step 1/3. The polypeptide is Histidine ammonia-lyase (Staphylococcus saprophyticus subsp. saprophyticus (strain ATCC 15305 / DSM 20229 / NCIMB 8711 / NCTC 7292 / S-41)).